The following is a 522-amino-acid chain: MSEIWEDAIKSNAWPFVEAKKILDSLNGQIPEKGYVLFETGYGPSGLPHIGTFGENARMVMVQKAFEQLSDIPTKLICFSDDMDGLRKVPSNIPNPEMVAQYMDMPLTSIPDTFGECESYGHYMNAKLRSFLDKFGFEYEFYSSTNCYKAGMFDEMLIMVLEKYDEIMELMLPTFREERKATYSPFMPICPKTGKVLQVPIEKWDAKAGTVTYKDKAGNYIEVPVTGGHCKLQWKPDFGMRWAALKVDYEMYGKDHLANARLYSEICRILGGKPPVQLCYELFLDENGEKISKSKGNSISIDDWLKYAPVESMALFMYQNPTRAKRLFFDVIPKNVDEYITFNQKYHLEEDRAKRVANPVYHIHHGNVPKIETFGITYSLLLNLTSVCNPSDKSVLWGFISKYEPQATPNTNPYLDHLAEFAIRYYNDFIKAHKSYLSPSEKHKVILQDILDMLSDIADQTEAEAIQKAIYDIGMKAGYANLRDYFKDLYQILLGQNEGPRLGTFIKLYGVQEMKKLVEGQL.

The 'HIGH' region motif lies at Pro44 to Thr52. A 'KMSKS' region motif is present at residues Lys290–Ser294. Lys293 contacts ATP.

It belongs to the class-I aminoacyl-tRNA synthetase family.

It localises to the cytoplasm. It carries out the reaction tRNA(Lys) + L-lysine + ATP = L-lysyl-tRNA(Lys) + AMP + diphosphate. The chain is Lysine--tRNA ligase from Rickettsia rickettsii (strain Iowa).